Reading from the N-terminus, the 398-residue chain is MAKLTVKDVELKGKKVLVRVDFNVPIKDGVITNDNRITAALPTIKYILEQGGRAVLFSHLGRVKEEADKAGKSLAPVAKALSEKLGQDVVFPGTTRGAELEAAINELKDGEILLVENTRFEDIDGKKESKNDPELGKYWASLGDGIFVNDAFGTAHRAHASNVGISANVEKAVAGFLLENEIAYIQEAVEAPERPFVAILGGSKVSDKIGVIENLLSKADKVIIGGGMAYTFLKAQGYEIGTSLVEDDKLDLAKELLEKAAGKLILPLDHKVANAFAGYTEVKETADQNIPAGFMGLDVASKTIADYNTQLEGAKTVVWNGPVGVFENPDFQAGTVGLMEAIVKQPGVKSIIGGGDSAAAAINLGYAEKFSWISTGGGASMELLEGKVLPGLAALTEK.

Substrate is bound by residues 21–23 (DFN), Arg36, 59–62 (HLGR), Arg119, and Arg157. Residues Lys208, Gly296, Glu327, and 354 to 357 (GGDS) contribute to the ATP site.

The protein belongs to the phosphoglycerate kinase family. Monomer.

Its subcellular location is the cytoplasm. The catalysed reaction is (2R)-3-phosphoglycerate + ATP = (2R)-3-phospho-glyceroyl phosphate + ADP. Its pathway is carbohydrate degradation; glycolysis; pyruvate from D-glyceraldehyde 3-phosphate: step 2/5. The polypeptide is Phosphoglycerate kinase (Lactococcus lactis subsp. cremoris (strain SK11)).